We begin with the raw amino-acid sequence, 387 residues long: Phosphoglycerate kinase (387 aa).

Residues 21–23, arginine 36, 59–62, arginine 113, and arginine 146 contribute to the substrate site; these read DLN and HLGR. ATP-binding positions include lysine 197, glutamate 314, and 340–343; that span reads GGDT.

This sequence belongs to the phosphoglycerate kinase family. In terms of assembly, monomer.

The protein resides in the cytoplasm. It catalyses the reaction (2R)-3-phosphoglycerate + ATP = (2R)-3-phospho-glyceroyl phosphate + ADP. The protein operates within carbohydrate degradation; glycolysis; pyruvate from D-glyceraldehyde 3-phosphate: step 2/5. The chain is Phosphoglycerate kinase from Proteus mirabilis (strain HI4320).